Consider the following 103-residue polypeptide: Gibberellin-regulated protein 13 (103 aa).

The signal sequence occupies residues 1-20 (MATKLSIIVFSIVVLHLLLS).

This sequence belongs to the GASA family. Six disulfide bonds may be present.

It localises to the secreted. Functionally, gibberellin-regulated protein that may function in hormonal controlled steps of development such as seed germination, flowering and seed maturation. The polypeptide is Gibberellin-regulated protein 13 (GASA13) (Arabidopsis thaliana (Mouse-ear cress)).